A 179-amino-acid polypeptide reads, in one-letter code: Natural killer cells antigen CD94 (179 aa).

The Cytoplasmic portion of the chain corresponds to 1-10 (MAVFKTTLWR). A helical; Signal-anchor for type II membrane protein membrane pass occupies residues 11 to 31 (LISGTLGIICLSLMSTLGILL). Residues 32-179 (KNSFTKLSIE…NRYICKQQLI (148 aa)) are Extracellular-facing. Intrachain disulfides connect Cys58-Cys70 and Cys61-Cys72. In terms of domain architecture, C-type lectin spans 68–175 (YRCNCYFISS…CEDKNRYICK (108 aa)). 2 N-linked (GlcNAc...) asparagine glycosylation sites follow: Asn83 and Asn132. Cystine bridges form between Cys89-Cys174 and Cys152-Cys166.

As to quaternary structure, can form disulfide-bonded heterodimer with NKG2 family members KLRC1 and KLRC2. KLRD1-KLRC1 heterodimer interacts with peptide-bound HLA-E-B2M heterotrimeric complex. KLRD1 plays a prominent role in directly interacting with HLA-E. KLRD1-KLRC1 interacts with much higher affinity with peptide-bound HLA-E-B2M than KLRD1-KLRC2. Interacts with the adapter protein TYROBP/DAP12; this interaction is required for cell surface expression and cell activation. As to expression, expressed in NK cell subsets (at protein level). Expressed in memory/effector CD8-positive alpha-beta T cell subsets (at protein level). Expressed in melanoma-specific cytotoxic T cell clones (at protein level). Expressed in terminally differentiated cytotoxic gamma-delta T cells (at protein level). KLRD1-KLRC1 and KLRD1-KLRC2 are differentially expressed in NK and T cell populations, with only minor subsets expressing both receptor complexes (at protein level).

The protein resides in the cell membrane. Immune receptor involved in self-nonself discrimination. In complex with KLRC1 or KLRC2 on cytotoxic and regulatory lymphocyte subsets, recognizes non-classical major histocompatibility (MHC) class Ib molecule HLA-E loaded with self-peptides derived from the signal sequence of classical MHC class Ia and non-classical MHC class Ib molecules. Enables cytotoxic cells to monitor the expression of MHC class I molecules in healthy cells and to tolerate self. Primarily functions as a ligand binding subunit as it lacks the capacity to signal. Functionally, KLRD1-KLRC1 acts as an immune inhibitory receptor. Key inhibitory receptor on natural killer (NK) cells that regulates their activation and effector functions. Dominantly counteracts T cell receptor signaling on a subset of memory/effector CD8-positive T cells as part of an antigen-driven response to avoid autoimmunity. On intraepithelial CD8-positive gamma-delta regulatory T cells triggers TGFB1 secretion, which in turn limits the cytotoxic programming of intraepithelial CD8-positive alpha-beta T cells, distinguishing harmless from pathogenic antigens. In HLA-E-rich tumor microenvironment, acts as an immune inhibitory checkpoint and may contribute to progressive loss of effector functions of NK cells and tumor-specific T cells, a state known as cell exhaustion. Upon HLA-E-peptide binding, transmits intracellular signals through KLRC1 immunoreceptor tyrosine-based inhibition motifs (ITIMs) by recruiting INPP5D/SHIP-1 and INPPL1/SHIP-2 tyrosine phosphatases to ITIMs, and ultimately opposing signals transmitted by activating receptors through dephosphorylation of proximal signaling molecules. Its function is as follows. KLRD1-KLRC2 acts as an immune activating receptor. On cytotoxic lymphocyte subsets recognizes HLA-E loaded with signal sequence-derived peptides from non-classical MHC class Ib HLA-G molecules, likely playing a role in the generation and effector functions of adaptive NK cells and in maternal-fetal tolerance during pregnancy. Regulates the effector functions of terminally differentiated cytotoxic lymphocyte subsets, and in particular may play a role in adaptive NK cell response to viral infection. Upon HLA-E-peptide binding, transmits intracellular signals via the adapter protein TYROBP/DAP12, triggering the phosphorylation of proximal signaling molecules and cell activation. In terms of biological role, (Microbial infection) Viruses like human cytomegalovirus have evolved an escape mechanism whereby virus-induced down-regulation of host MHC class I molecules is coupled to the binding of viral peptides to HLA-E, restoring HLA-E expression and inducing HLA-E-dependent NK cell immune tolerance to infected cells. Recognizes HLA-E in complex with human cytomegalovirus UL40-derived peptide (VMAPRTLIL) and inhibits NK cell cytotoxicity. (Microbial infection) May recognize HLA-E in complex with HIV-1 gag/Capsid protein p24-derived peptide (AISPRTLNA) on infected cells and may inhibit NK cell cytotoxicity, a mechanism that allows HIV-1 to escape immune recognition. Functionally, (Microbial infection) Upon SARS-CoV-2 infection, may contribute to functional exhaustion of cytotoxic NK cells and CD8-positive T cells. On NK cells, may recognize HLA-E in complex with SARS-CoV-2 S/Spike protein S1-derived peptide (LQPRTFLL) expressed on the surface of lung epithelial cells, inducing NK cell exhaustion and dampening antiviral immune surveillance. In Homo sapiens (Human), this protein is Natural killer cells antigen CD94 (KLRD1).